A 1416-amino-acid polypeptide reads, in one-letter code: DNA-directed RNA polymerase subunit beta' (1416 aa).

Zn(2+) contacts are provided by cysteine 71, cysteine 73, cysteine 86, and cysteine 89. Residues aspartate 461, aspartate 463, and aspartate 465 each contribute to the Mg(2+) site. Zn(2+) contacts are provided by cysteine 815, cysteine 889, cysteine 896, and cysteine 899.

It belongs to the RNA polymerase beta' chain family. The RNAP catalytic core consists of 2 alpha, 1 beta, 1 beta' and 1 omega subunit. When a sigma factor is associated with the core the holoenzyme is formed, which can initiate transcription. Mg(2+) serves as cofactor. It depends on Zn(2+) as a cofactor.

The enzyme catalyses RNA(n) + a ribonucleoside 5'-triphosphate = RNA(n+1) + diphosphate. In terms of biological role, DNA-dependent RNA polymerase catalyzes the transcription of DNA into RNA using the four ribonucleoside triphosphates as substrates. The protein is DNA-directed RNA polymerase subunit beta' of Haemophilus influenzae (strain PittEE).